Here is a 437-residue protein sequence, read N- to C-terminus: tRNA-queuosine alpha-mannosyltransferase (437 aa).

The protein belongs to the glycosyltransferase group 1 family. Glycosyltransferase 4 subfamily.

The protein resides in the cytoplasm. Its subcellular location is the nucleus. The catalysed reaction is queuosine(34) in tRNA(Asp) + GDP-alpha-D-mannose = O-4''-alpha-D-mannosylqueuosine(34) in tRNA(Asp) + GDP + H(+). Its function is as follows. Glycosyltransferase that specifically catalyzes mannosylation of cytoplasmic tRNA(Asp) modified with queuosine at position 34 (queuosine(34)). Mannosylates the cyclopentene moiety of queuosine(34) in tRNA(Asp) to form mannosyl-queuosine(34). Mannosylation of queuosine(34) in tRNA(Asp) is required to slow-down elongation at cognate codons, GAC and GAU, thereby regulating protein translation. In Xenopus tropicalis (Western clawed frog), this protein is tRNA-queuosine alpha-mannosyltransferase (gtdc1).